A 489-amino-acid polypeptide reads, in one-letter code: Topoisomerase I damage affected protein 11 (489 aa).

5 disordered regions span residues 1-199 (MDQK…QSMA), 263-321 (INVS…DDNK), 344-370 (ERTL…KSVS), 391-413 (EDGH…HGQV), and 439-477 (DDNS…DSTL). Over residues 19–35 (DTSSRYTTGSISPQFAS) the composition is skewed to polar residues. Basic and acidic residues predominate over residues 73–89 (EESHNHPLKEDKSESRQ). Polar residues-rich tracts occupy residues 90 to 103 (RQVS…SSKG), 128 to 147 (PQSQ…NLHP), and 156 to 167 (NATTQTPSSMSM). Positions 182–197 (SSKRNSMHSRTSSSQS) are enriched in low complexity. Residues 210 to 266 (VNALLQSLANKELELLECKRKIDDLKKQLHMEENIYQNKANELQELKNKVSKNINVS) are a coiled coil. Residues 263-281 (INVSGSNQPVFNKTSTTGR) are compositionally biased toward polar residues. Residues 396–411 (TQQSNSNVNRPKNTHG) are compositionally biased toward polar residues. Over residues 447–460 (KQRSGRTAVRKTKS) the composition is skewed to basic residues. A compositionally biased stretch (acidic residues) spans 468–477 (DDSDDGDSTL).

This sequence belongs to the TDA11 family.

It is found in the cytoplasm. This is Topoisomerase I damage affected protein 11 (TDA11) from Candida glabrata (strain ATCC 2001 / BCRC 20586 / JCM 3761 / NBRC 0622 / NRRL Y-65 / CBS 138) (Yeast).